Reading from the N-terminus, the 417-residue chain is Serine hydroxymethyltransferase (417 aa).

(6S)-5,6,7,8-tetrahydrofolate contacts are provided by residues leucine 116 and 120–122; that span reads GHL. Residue lysine 225 is modified to N6-(pyridoxal phosphate)lysine.

This sequence belongs to the SHMT family. Homodimer. Pyridoxal 5'-phosphate serves as cofactor.

It is found in the cytoplasm. It carries out the reaction (6R)-5,10-methylene-5,6,7,8-tetrahydrofolate + glycine + H2O = (6S)-5,6,7,8-tetrahydrofolate + L-serine. It participates in one-carbon metabolism; tetrahydrofolate interconversion. The protein operates within amino-acid biosynthesis; glycine biosynthesis; glycine from L-serine: step 1/1. In terms of biological role, catalyzes the reversible interconversion of serine and glycine with tetrahydrofolate (THF) serving as the one-carbon carrier. This reaction serves as the major source of one-carbon groups required for the biosynthesis of purines, thymidylate, methionine, and other important biomolecules. Also exhibits THF-independent aldolase activity toward beta-hydroxyamino acids, producing glycine and aldehydes, via a retro-aldol mechanism. The chain is Serine hydroxymethyltransferase from Hydrogenobaculum sp. (strain Y04AAS1).